A 261-amino-acid chain; its full sequence is Cytosolic Fe-S cluster assembly factor Nubp2 homolog (261 aa).

14-21 (GKGGVGKS) lines the ATP pocket. 2 residues coordinate [4Fe-4S] cluster: cysteine 188 and cysteine 191.

Belongs to the Mrp/NBP35 ATP-binding proteins family. NUBP2/CFD1 subfamily. As to quaternary structure, heterotetramer of 2 Nubp1 and 2 Nubp2 chains. The cofactor is [4Fe-4S] cluster.

It is found in the cytoplasm. Component of the cytosolic iron-sulfur (Fe/S) protein assembly (CIA) machinery. Required for maturation of extramitochondrial Fe-S proteins. The Nubp1-Nubp2 heterotetramer forms a Fe-S scaffold complex, mediating the de novo assembly of an Fe-S cluster and its transfer to target apoproteins. The sequence is that of Cytosolic Fe-S cluster assembly factor Nubp2 homolog from Drosophila willistoni (Fruit fly).